A 394-amino-acid polypeptide reads, in one-letter code: L-lactate dehydrogenase (394 aa).

An FMN hydroxy acid dehydrogenase domain is found at Met-1 to Glu-380. Tyr-24 is a binding site for substrate. FMN is bound by residues Ser-106 and Gln-127. Substrate is bound at residue Tyr-129. Position 155 (Thr-155) interacts with FMN. Residue Arg-164 participates in substrate binding. Lys-251 is a binding site for FMN. His-275 functions as the Proton acceptor in the catalytic mechanism. Arg-278 is a binding site for substrate. Position 306–330 (Asp-306–Arg-330) interacts with FMN.

The protein belongs to the FMN-dependent alpha-hydroxy acid dehydrogenase family. It depends on FMN as a cofactor.

It localises to the cell inner membrane. It catalyses the reaction (S)-lactate + A = pyruvate + AH2. Catalyzes the conversion of L-lactate to pyruvate. Is coupled to the respiratory chain. In Klebsiella pneumoniae subsp. pneumoniae (strain ATCC 700721 / MGH 78578), this protein is L-lactate dehydrogenase.